Consider the following 613-residue polypeptide: Dihydroxy-acid dehydratase (613 aa).

Mg(2+) is bound at residue aspartate 81. A [2Fe-2S] cluster-binding site is contributed by cysteine 122. Mg(2+) contacts are provided by aspartate 123 and lysine 124. Lysine 124 is subject to N6-carboxylysine. Cysteine 193 provides a ligand contact to [2Fe-2S] cluster. Glutamate 489 is a binding site for Mg(2+). Serine 515 (proton acceptor) is an active-site residue.

It belongs to the IlvD/Edd family. Homodimer. [2Fe-2S] cluster serves as cofactor. The cofactor is Mg(2+).

It catalyses the reaction (2R)-2,3-dihydroxy-3-methylbutanoate = 3-methyl-2-oxobutanoate + H2O. The catalysed reaction is (2R,3R)-2,3-dihydroxy-3-methylpentanoate = (S)-3-methyl-2-oxopentanoate + H2O. The protein operates within amino-acid biosynthesis; L-isoleucine biosynthesis; L-isoleucine from 2-oxobutanoate: step 3/4. Its pathway is amino-acid biosynthesis; L-valine biosynthesis; L-valine from pyruvate: step 3/4. Its function is as follows. Functions in the biosynthesis of branched-chain amino acids. Catalyzes the dehydration of (2R,3R)-2,3-dihydroxy-3-methylpentanoate (2,3-dihydroxy-3-methylvalerate) into 2-oxo-3-methylpentanoate (2-oxo-3-methylvalerate) and of (2R)-2,3-dihydroxy-3-methylbutanoate (2,3-dihydroxyisovalerate) into 2-oxo-3-methylbutanoate (2-oxoisovalerate), the penultimate precursor to L-isoleucine and L-valine, respectively. This is Dihydroxy-acid dehydratase from Pseudomonas fluorescens (strain ATCC BAA-477 / NRRL B-23932 / Pf-5).